We begin with the raw amino-acid sequence, 118 residues long: Non-specific lipid-transfer protein 2 (118 aa).

A signal peptide spans 1–25; sequence MARGMKLACVVLVICMVVIAPMAEG. 4 disulfide bridges follow: Cys29-Cys76, Cys39-Cys53, Cys54-Cys99, and Cys74-Cys113.

Belongs to the plant LTP family.

Plant non-specific lipid-transfer proteins transfer phospholipids as well as galactolipids across membranes. May play a role in wax or cutin deposition in the cell walls of expanding epidermal cells and certain secretory tissues. Binds saturated fatty acids, jasmonic acid and, with highest efficiency, unsaturated fatty acids and lysolipids. This is Non-specific lipid-transfer protein 2 from Lens culinaris (Lentil).